Consider the following 194-residue polypeptide: UPF0301 protein FTM_0963 (194 aa).

This sequence belongs to the UPF0301 (AlgH) family.

The protein is UPF0301 protein FTM_0963 of Francisella tularensis subsp. mediasiatica (strain FSC147).